Reading from the N-terminus, the 371-residue chain is Cytochrome b (371 aa).

Transmembrane regions (helical) follow at residues 25 to 45, 69 to 90, 105 to 125, and 170 to 190; these read FGSM…FLAV, WMVQ…YIHI, WLSG…GYVL, and FFAL…LHVL. The heme b site is built by His75 and His89. The heme b site is built by His174 and His188. His193 is an a ubiquinone binding site. Transmembrane regions (helical) follow at residues 218–238, 280–300, 312–332, and 339–358; these read MKDL…ISFF, LGGA…PFIH, LMQL…WAAT, and FISI…ISNP.

This sequence belongs to the cytochrome b family. The cytochrome bc1 complex contains 3 respiratory subunits (MT-CYB, CYC1 and UQCRFS1), 2 core proteins (UQCRC1 and UQCRC2) and probably 6 low-molecular weight proteins. The cofactor is heme b.

It is found in the mitochondrion inner membrane. Component of the ubiquinol-cytochrome c reductase complex (complex III or cytochrome b-c1 complex) that is part of the mitochondrial respiratory chain. The b-c1 complex mediates electron transfer from ubiquinol to cytochrome c. Contributes to the generation of a proton gradient across the mitochondrial membrane that is then used for ATP synthesis. The protein is Cytochrome b (MT-CYB) of Boa constrictor (Boa).